The following is a 349-amino-acid chain: Green-sensitive opsin-1 (349 aa).

Over 1–36 the chain is Extracellular; it reads MNGTEGSNFYIPMSNRTGLVRSPYDYTQYYLAEPWK. Residues Asn-2 and Asn-15 are each glycosylated (N-linked (GlcNAc...) asparagine). A helical transmembrane segment spans residues 37 to 61; sequence FKALAFYMFLLIIFGFPINVLTLVV. Over 62–73 the chain is Cytoplasmic; that stretch reads TAQHKKLRQPLN. A helical membrane pass occupies residues 74–99; the sequence is YILVNLAFAGTIMVIFGFTVSFYCSL. Residues 100-113 are Extracellular-facing; it reads VGYMALGPLGCVME. Cys-110 and Cys-187 form a disulfide bridge. The chain crosses the membrane as a helical span at residues 114–133; that stretch reads GFFATLGGQVALWSLVVLAI. The Cytoplasmic segment spans residues 134-152; sequence ERYIVVCKPMGSFKFSANH. A helical transmembrane segment spans residues 153-176; that stretch reads AMAGIAFTWFMACSCAVPPLFGWS. Over 177–202 the chain is Extracellular; it reads RYLPEGMQTSCGPDYYTLNPEYNNES. Asn-200 carries an N-linked (GlcNAc...) asparagine glycan. Residues 203–230 form a helical membrane-spanning segment; sequence YVMYMFSCHFCIPVTTIFFTYGSLVCTV. At 231–252 the chain is on the cytoplasmic side; the sequence is KAAAAQQQESESTQKAEREVTR. The chain crosses the membrane as a helical span at residues 253 to 276; it reads MVILMVLGFLFAWVPYASFAAWIF. The Extracellular segment spans residues 277 to 284; that stretch reads FNRGAAFS. Residues 285–309 form a helical membrane-spanning segment; it reads AQAMAVPAFFSKTSAVFNPIIYVLL. Lys-296 carries the N6-(retinylidene)lysine modification. Residues 310 to 349 lie on the Cytoplasmic side of the membrane; that stretch reads NKQFRSCMLNTLFCGKSPLGDDESSSVSTSKTEVSSVSPA. The disordered stretch occupies residues 328–349; it reads LGDDESSSVSTSKTEVSSVSPA. Over residues 334-349 the composition is skewed to low complexity; it reads SSVSTSKTEVSSVSPA.

Belongs to the G-protein coupled receptor 1 family. Opsin subfamily. In terms of processing, phosphorylated on some or all of the serine and threonine residues present in the C-terminal region. As to expression, retinal double cone accessory photoreceptor cell outer segments.

The protein localises to the membrane. In terms of biological role, visual pigments are the light-absorbing molecules that mediate vision. They consist of an apoprotein, opsin, covalently linked to cis-retinal. The polypeptide is Green-sensitive opsin-1 (opn1mw1) (Danio rerio (Zebrafish)).